The chain runs to 513 residues: Histidine ammonia-lyase (513 aa).

A cross-link (5-imidazolinone (Ala-Gly)) is located at residues 142 to 144; sequence ASG. Serine 143 bears the 2,3-didehydroalanine (Ser) mark.

This sequence belongs to the PAL/histidase family. In terms of processing, contains an active site 4-methylidene-imidazol-5-one (MIO), which is formed autocatalytically by cyclization and dehydration of residues Ala-Ser-Gly.

The protein resides in the cytoplasm. The enzyme catalyses L-histidine = trans-urocanate + NH4(+). It participates in amino-acid degradation; L-histidine degradation into L-glutamate; N-formimidoyl-L-glutamate from L-histidine: step 1/3. The protein is Histidine ammonia-lyase of Mesorhizobium japonicum (strain LMG 29417 / CECT 9101 / MAFF 303099) (Mesorhizobium loti (strain MAFF 303099)).